A 575-amino-acid polypeptide reads, in one-letter code: UvrABC system protein C (575 aa).

The GIY-YIG domain maps to 15-90; the sequence is AEPGVYQFEA…IKRHQPRYNV (76 aa). The UVR domain occupies 198–233; sequence GVLAEPLRREMETAAASQAFERAASLRDRLEAVETF.

The protein belongs to the UvrC family. In terms of assembly, interacts with UvrB in an incision complex.

The protein resides in the cytoplasm. Functionally, the UvrABC repair system catalyzes the recognition and processing of DNA lesions. UvrC both incises the 5' and 3' sides of the lesion. The N-terminal half is responsible for the 3' incision and the C-terminal half is responsible for the 5' incision. The chain is UvrABC system protein C from Natronomonas pharaonis (strain ATCC 35678 / DSM 2160 / CIP 103997 / JCM 8858 / NBRC 14720 / NCIMB 2260 / Gabara) (Halobacterium pharaonis).